A 512-amino-acid chain; its full sequence is Glycerol-3-phosphate dehydrogenase (512 aa).

16-44 (DVAVVGGGINGVGIAADAAGRGLSVFLCE) is an FAD binding site.

It belongs to the FAD-dependent glycerol-3-phosphate dehydrogenase family. It depends on FAD as a cofactor.

The protein resides in the cytoplasm. The catalysed reaction is a quinone + sn-glycerol 3-phosphate = dihydroxyacetone phosphate + a quinol. The polypeptide is Glycerol-3-phosphate dehydrogenase (glpD) (Pseudomonas aeruginosa (strain ATCC 15692 / DSM 22644 / CIP 104116 / JCM 14847 / LMG 12228 / 1C / PRS 101 / PAO1)).